Reading from the N-terminus, the 738-residue chain is MDAFKLLTRATKLKTGATPSSAQSSTRLPSTGKAENPQLFRNSEAEKVLEQAQQGKKRKRTAAAEARDADDDAAELNFFGARKAAVSSTPTSKEEKQEQERSGEDDASDEEVEFMDEVQRRTVLNAHKIKVTDLRDLEEIQPVRVASEEPKKKKKKRKQQEEEESKVPLTKKEQKKARRLYPEPLVSFKELRSKYKISSRLAENIAEQGFTVPTEVQLGTLPLLLGGFESKAGESVEPDLLVVAPTGSGKTLSFLIPVINKIVRHHHDQSQEQERGIFSIIVAPTKELASQIVNEGRKLVHGTGVKIALMKKGMRVVEREDEDDDGDDSSSEDGDESSESEHEERPIAKKSKGKAPVTKSDILVTTPLQLVNALSTNQTKPMATLPLVRNIVLDEADVLLDPLFRDQTLNIWRACTHPELRASLWSATMGSNVEDLAKSTIKERKEAVNQTKSYPLLRLVVGLKDSAIPNIEHKLIYAATEQGKLLGLRQLLHPTAASASDVRLRPPFLIFTQTIPRAVALHSELRYDIPTEAGGSSRIAVLHSDLSDGQRSEIMKNFRKGEIWILVTTDLLARGVDFRGINGVVNYDIPNSAAVYVHRVGRTGRAGREGGIAVTYYTKEDIPYVKSIANIIDVSEKLRGKTGEKSIQKWLLDALPDLSKKDKKELKKHGVKARQSNLKSDKDDKEHRKTRISTKSGFERRIENKKKALIAANRNRKSQAQSAADGDSGNESWDGLEN.

2 disordered regions span residues 1-112 and 145-176; these read MDAF…DEEV and VASE…EQKK. Positions 17–29 are enriched in polar residues; it reads ATPSSAQSSTRLP. Basic and acidic residues predominate over residues 92–104; sequence SKEEKQEQERSGE. Positions 190–218 match the Q motif motif; that stretch reads ELRSKYKISSRLAENIAEQGFTVPTEVQL. In terms of domain architecture, Helicase ATP-binding spans 231–447; it reads KAGESVEPDL…KSTIKERKEA (217 aa). 244-251 is a binding site for ATP; the sequence is APTGSGKT. The interval 316-356 is disordered; the sequence is VVEREDEDDDGDDSSSEDGDESSESEHEERPIAKKSKGKAP. Acidic residues predominate over residues 319–338; it reads REDEDDDGDDSSSEDGDESS. The DEAD box motif lies at 394–397; it reads DEAD. Residues 487–655 form the Helicase C-terminal domain; it reads GLRQLLHPTA…SIQKWLLDAL (169 aa). Residues 663-738 are disordered; that stretch reads KKELKKHGVK…GNESWDGLEN (76 aa). Positions 697-706 are enriched in basic and acidic residues; the sequence is GFERRIENKK.

This sequence belongs to the DEAD box helicase family. DDX52/ROK1 subfamily. As to quaternary structure, interacts with the U3 snoRNA and is associated with the 90S and 40S pre-ribosomes.

Its subcellular location is the nucleus. It is found in the nucleolus. The enzyme catalyses ATP + H2O = ADP + phosphate + H(+). Its function is as follows. ATP-dependent RNA helicase involved in 40S ribosomal subunit biogenesis. Required for the processing and cleavage of 35S pre-rRNA at sites A0, A1, and A2, leading to mature 18S rRNA. The polypeptide is ATP-dependent RNA helicase rok1 (rok1) (Aspergillus clavatus (strain ATCC 1007 / CBS 513.65 / DSM 816 / NCTC 3887 / NRRL 1 / QM 1276 / 107)).